The following is a 103-amino-acid chain: Conantokin-Br (103 aa).

The first 21 residues, 1–21 (MQLYTYLYLLVPLVTFHLILG), serve as a signal peptide directing secretion. The propeptide occupies 22–79 (TGTLDHGGALTERRSTDATALKPEPVLQKSAARSTDDNGKDRLTQMKRILKKRGKNAR). The tract at residues 34–64 (RRSTDATALKPEPVLQKSAARSTDDNGKDRL) is disordered. A compositionally biased stretch (basic and acidic residues) spans 55–64 (STDDNGKDRL). Glutamate 82, glutamate 83, glutamate 89, and glutamate 93 each carry 4-carboxyglutamate. A divalent metal cation is bound by residues glutamate 89 and glutamate 93.

It belongs to the conotoxin B superfamily. Ca(2+) is required as a cofactor. Mg(2+) serves as cofactor. As to expression, expressed by the venom duct.

Its subcellular location is the secreted. In terms of biological role, conantokins inhibit N-methyl-D-aspartate (NMDA) receptors. This toxin inhibits NR2 subunits N-methyl-D-aspartate (NMDA) receptor-mediated calcium influx in central nervous system neurons in the following order of preference: NR2B/GRIN2B (IC(50)=0.14 uM), NR2D/GRIN2D (IC(50)=0.31 uM), NR2A/GRIN2A (IC(50)=0.68 uM) and NR2C/GRIN2A (IC(50)=4.9 uM), when tested on rat receptors. This is Conantokin-Br from Conus sulcatus (Sulcate cone).